Consider the following 500-residue polypeptide: Aldehyde dehydrogenase, mitochondrial (500 aa).

Lysine 35, lysine 56, lysine 61, and lysine 142 each carry N6-acetyllysine. Position 245–250 (245–250 (GSTEVG)) interacts with NAD(+). Catalysis depends on glutamate 268, which acts as the Proton acceptor. Residue cysteine 302 is the Nucleophile of the active site. N6-acetyllysine occurs at positions 351, 358, 366, 390, 409, 411, 424, and 434.

It belongs to the aldehyde dehydrogenase family. Homotetramer. In terms of processing, in response to mitochondrial stress, the precursor protein is ubiquitinated by the SIFI complex in the cytoplasm before mitochondrial import, leading to its degradation. Within the SIFI complex, UBR4 initiates ubiquitin chain that are further elongated or branched by KCMF1.

It is found in the mitochondrion matrix. It catalyses the reaction an aldehyde + NAD(+) + H2O = a carboxylate + NADH + 2 H(+). It participates in alcohol metabolism; ethanol degradation; acetate from ethanol: step 2/2. Its function is as follows. Required for clearance of cellular formaldehyde, a cytotoxic and carcinogenic metabolite that induces DNA damage. The polypeptide is Aldehyde dehydrogenase, mitochondrial (ALDH2) (Mesocricetus auratus (Golden hamster)).